A 296-amino-acid chain; its full sequence is GTPase Era (296 aa).

An Era-type G domain is found at 7–174; sequence HCGFVAIVGR…LDQVRPHLPE (168 aa). Residues 15–22 form a G1 region; sequence GRPNVGKS. 15 to 22 provides a ligand contact to GTP; sequence GRPNVGKS. The G2 stretch occupies residues 41–45; that stretch reads QTTRH. Residues 62–65 form a G3 region; the sequence is DTPG. Residues 62 to 66 and 123 to 126 contribute to the GTP site; these read DTPGF and NKLD. The segment at 123–126 is G4; sequence NKLD. Positions 153-155 are G5; that stretch reads VSA. In terms of domain architecture, KH type-2 spans 205–281; that stretch reads LGEELPYEMN…FLQVWVKVKS (77 aa).

This sequence belongs to the TRAFAC class TrmE-Era-EngA-EngB-Septin-like GTPase superfamily. Era GTPase family. As to quaternary structure, monomer.

The protein localises to the cytoplasm. Its subcellular location is the cell inner membrane. Its function is as follows. An essential GTPase that binds both GDP and GTP, with rapid nucleotide exchange. Plays a role in 16S rRNA processing and 30S ribosomal subunit biogenesis and possibly also in cell cycle regulation and energy metabolism. The polypeptide is GTPase Era (Chromobacterium violaceum (strain ATCC 12472 / DSM 30191 / JCM 1249 / CCUG 213 / NBRC 12614 / NCIMB 9131 / NCTC 9757 / MK)).